The chain runs to 143 residues: Cytochrome c-type biogenesis protein CcmE (143 aa).

Residues 1–8 (MTPVRRRK) are Cytoplasmic-facing. The helical; Signal-anchor for type II membrane protein transmembrane segment at 9–29 (LFILLFALSVLSAAAALVLYA) threads the bilayer. The Periplasmic segment spans residues 30–143 (LRQNISLFYT…KSALADKVKQ (114 aa)). Heme is bound by residues H124 and Y128.

Belongs to the CcmE/CycJ family.

It localises to the cell inner membrane. Its function is as follows. Heme chaperone required for the biogenesis of c-type cytochromes. Transiently binds heme delivered by CcmC and transfers the heme to apo-cytochromes in a process facilitated by CcmF and CcmH. The polypeptide is Cytochrome c-type biogenesis protein CcmE (Legionella pneumophila (strain Lens)).